The following is a 318-amino-acid chain: Acetyl-coenzyme A carboxylase carboxyl transferase subunit alpha (318 aa).

Positions 43–293 (RSQTALRDLY…GDGIAAALKS (251 aa)) constitute a CoA carboxyltransferase C-terminal domain.

It belongs to the AccA family. Acetyl-CoA carboxylase is a heterohexamer composed of biotin carboxyl carrier protein (AccB), biotin carboxylase (AccC) and two subunits each of ACCase subunit alpha (AccA) and ACCase subunit beta (AccD).

The protein localises to the cytoplasm. The enzyme catalyses N(6)-carboxybiotinyl-L-lysyl-[protein] + acetyl-CoA = N(6)-biotinyl-L-lysyl-[protein] + malonyl-CoA. The protein operates within lipid metabolism; malonyl-CoA biosynthesis; malonyl-CoA from acetyl-CoA: step 1/1. Component of the acetyl coenzyme A carboxylase (ACC) complex. First, biotin carboxylase catalyzes the carboxylation of biotin on its carrier protein (BCCP) and then the CO(2) group is transferred by the carboxyltransferase to acetyl-CoA to form malonyl-CoA. The polypeptide is Acetyl-coenzyme A carboxylase carboxyl transferase subunit alpha (Bartonella bacilliformis (strain ATCC 35685 / KC583 / Herrer 020/F12,63)).